The sequence spans 203 residues: Holliday junction branch migration complex subunit RuvA (203 aa).

The domain I stretch occupies residues 1-63 (MIFSVRGEVL…EDSMTLYGFS (63 aa)). The domain II stretch occupies residues 64–141 (DAENRDLFLA…GPVGASGLTV (78 aa)). The flexible linker stretch occupies residues 141 to 145 (VGTAA). A domain III region spans residues 146 to 203 (DGNAVRGSVVEALVGLGFAAKQAEEATDQVLDGELGKDGAVATSSALRAALSLLGKTR).

This sequence belongs to the RuvA family. In terms of assembly, homotetramer. Forms an RuvA(8)-RuvB(12)-Holliday junction (HJ) complex. HJ DNA is sandwiched between 2 RuvA tetramers; dsDNA enters through RuvA and exits via RuvB. An RuvB hexamer assembles on each DNA strand where it exits the tetramer. Each RuvB hexamer is contacted by two RuvA subunits (via domain III) on 2 adjacent RuvB subunits; this complex drives branch migration. In the full resolvosome a probable DNA-RuvA(4)-RuvB(12)-RuvC(2) complex forms which resolves the HJ.

The protein localises to the cytoplasm. Its function is as follows. The RuvA-RuvB-RuvC complex processes Holliday junction (HJ) DNA during genetic recombination and DNA repair, while the RuvA-RuvB complex plays an important role in the rescue of blocked DNA replication forks via replication fork reversal (RFR). RuvA specifically binds to HJ cruciform DNA, conferring on it an open structure. The RuvB hexamer acts as an ATP-dependent pump, pulling dsDNA into and through the RuvAB complex. HJ branch migration allows RuvC to scan DNA until it finds its consensus sequence, where it cleaves and resolves the cruciform DNA. This chain is Holliday junction branch migration complex subunit RuvA, found in Mycobacterium leprae (strain Br4923).